The chain runs to 279 residues: 3-methyl-2-oxobutanoate hydroxymethyltransferase (279 aa).

2 residues coordinate Mg(2+): D44 and D83. Residues D44–S45, D83, and K113 each bind 3-methyl-2-oxobutanoate. Residue E115 participates in Mg(2+) binding. Residue E182 is the Proton acceptor of the active site.

Belongs to the PanB family. Homodecamer; pentamer of dimers. The cofactor is Mg(2+).

Its subcellular location is the cytoplasm. The enzyme catalyses 3-methyl-2-oxobutanoate + (6R)-5,10-methylene-5,6,7,8-tetrahydrofolate + H2O = 2-dehydropantoate + (6S)-5,6,7,8-tetrahydrofolate. It functions in the pathway cofactor biosynthesis; (R)-pantothenate biosynthesis; (R)-pantoate from 3-methyl-2-oxobutanoate: step 1/2. Functionally, catalyzes the reversible reaction in which hydroxymethyl group from 5,10-methylenetetrahydrofolate is transferred onto alpha-ketoisovalerate to form ketopantoate. The polypeptide is 3-methyl-2-oxobutanoate hydroxymethyltransferase (Dehalococcoides mccartyi (strain ATCC BAA-2100 / JCM 16839 / KCTC 5957 / BAV1)).